The following is a 133-amino-acid chain: Small ribosomal subunit protein eS17 (133 aa).

This sequence belongs to the eukaryotic ribosomal protein eS17 family.

This is Small ribosomal subunit protein eS17 (RpS17) from Spodoptera frugiperda (Fall armyworm).